We begin with the raw amino-acid sequence, 196 residues long: Acyl-homoserine-lactone synthase (196 aa).

This sequence belongs to the autoinducer synthase family.

It carries out the reaction a fatty acyl-[ACP] + S-adenosyl-L-methionine = an N-acyl-L-homoserine lactone + S-methyl-5'-thioadenosine + holo-[ACP] + H(+). Functionally, required for the synthesis of a yet unknown N-aceyl-homoserine lactone (N-aceyl-HSL), an autoinducer molecule which binds to PhzR and thus regulates phenazine production. The sequence is that of Acyl-homoserine-lactone synthase (phzI) from Pseudomonas chlororaphis (Pseudomonas aureofaciens).